The sequence spans 761 residues: Hyperosmolality-gated Ca2+ permeable channel 1.6 (761 aa).

Transmembrane regions (helical) follow at residues 7–27 (IGVA…AFAI), 101–121 (IYLL…TTMV), 156–176 (PRFW…CFIL), 375–395 (LIVG…IAFV), 419–439 (LLKS…FLLF), 467–487 (FYMF…TAFQ), 512–532 (ATFF…GEIL), 583–603 (AAVS…AFVV), 630–650 (VVTA…TKHA), and 653–673 (STPL…HCKN). Positions 718–731 (RVGEDPEPEEKLES) are enriched in basic and acidic residues. The interval 718-761 (RVGEDPEPEEKLESDMSPPDLVATKRWSWRNTPLPSKDSCREIP) is disordered.

This sequence belongs to the CSC1 (TC 1.A.17) family.

It is found in the membrane. Acts as an osmosensitive calcium-permeable cation channel. The polypeptide is Hyperosmolality-gated Ca2+ permeable channel 1.6 (Arabidopsis thaliana (Mouse-ear cress)).